Here is a 676-residue protein sequence, read N- to C-terminus: RNA helicase NPH-II (676 aa).

One can recognise a Helicase ATP-binding domain in the interval 172-347; that stretch reads FSAWISHRPV…VFLPNPAFIH (176 aa). 185 to 192 provides a ligand contact to ATP; sequence GGTGVGKT. The DEXH box motif lies at 296–299; sequence DEVH. The Helicase C-terminal domain occupies 366-535; sequence NPSSRMAYIE…NYILYANKFN (170 aa).

The protein belongs to the DEAD box helicase family. DEAH subfamily. Monomer.

The protein resides in the virion. It catalyses the reaction ATP + H2O = ADP + phosphate + H(+). NTP-dependent helicase that catalyzes unidirectional unwinding of 3'tailed duplex RNAs and plays an important role during transcription of early mRNAs, presumably by preventing R-loop formation behind the elongating RNA polymerase. Might also play a role in the export of newly synthesized mRNA chains out of the core into the cytoplasm. Required for replication and propagation of viral particles. This Bos taurus (Bovine) protein is RNA helicase NPH-II (OPG084).